Here is a 362-residue protein sequence, read N- to C-terminus: Metacaspase-3 (362 aa).

Catalysis depends on residues His-174 and Cys-230.

This sequence belongs to the peptidase C14B family.

This is Metacaspase-3 (AMC3) from Arabidopsis thaliana (Mouse-ear cress).